Reading from the N-terminus, the 283-residue chain is UPF0273 protein STK_18300 (283 aa).

In terms of domain architecture, KaiC spans 4–249 (LRVRTYIPGF…YLRITNVKAE (246 aa)). Residue 31-38 (GGPGTGKS) participates in ATP binding. Positions 261-283 (MKKAVEESEEEKESIQEAEIEEE) are disordered. Residues 267-283 (ESEEEKESIQEAEIEEE) show a composition bias toward acidic residues.

It belongs to the UPF0273 family.

The sequence is that of UPF0273 protein STK_18300 from Sulfurisphaera tokodaii (strain DSM 16993 / JCM 10545 / NBRC 100140 / 7) (Sulfolobus tokodaii).